Consider the following 291-residue polypeptide: tRNA (guanine-N(1)-)-methyltransferase (291 aa).

S-adenosyl-L-methionine contacts are provided by residues G160 and 184 to 189 (IGDYVL).

Belongs to the RNA methyltransferase TrmD family. As to quaternary structure, homodimer.

The protein localises to the cytoplasm. The enzyme catalyses guanosine(37) in tRNA + S-adenosyl-L-methionine = N(1)-methylguanosine(37) in tRNA + S-adenosyl-L-homocysteine + H(+). Functionally, specifically methylates guanosine-37 in various tRNAs. The protein is tRNA (guanine-N(1)-)-methyltransferase of Corynebacterium efficiens (strain DSM 44549 / YS-314 / AJ 12310 / JCM 11189 / NBRC 100395).